The sequence spans 601 residues: Glutathione-regulated potassium-efflux system protein KefB (601 aa).

Helical transmembrane passes span 4–24 (SDFL…VPLA), 29–49 (IGAV…GLGF), 55–75 (EILH…GLEL), 87–107 (IFGV…GLLM), 115–135 (AAVV…LQLM), 152–172 (VLLF…LLAG), 177–197 (HFDW…LIGG), 207–227 (FIAA…LVLG), 230–250 (LFMD…GVLL), 268–288 (GLLL…GVLY), 291–311 (LLWV…VLYL), 324–344 (MQFA…FSTA), and 356–376 (ALLL…MKLV). The region spanning 400–519 (KPQVIVVGFG…AGVTQFSRET (120 aa)) is the RCK N-terminal domain.

The protein belongs to the monovalent cation:proton antiporter 2 (CPA2) transporter (TC 2.A.37) family. KefB subfamily. Interacts with the regulatory subunit KefG.

The protein localises to the cell inner membrane. In terms of biological role, pore-forming subunit of a potassium efflux system that confers protection against electrophiles. Catalyzes K(+)/H(+) antiport. The protein is Glutathione-regulated potassium-efflux system protein KefB of Escherichia coli O1:K1 / APEC.